We begin with the raw amino-acid sequence, 322 residues long: Transcription factor IIIA (322 aa).

9 C2H2-type zinc fingers span residues 12-36, 42-64, 70-95, 102-126, 132-156, 159-184, 188-211, 218-243, and 249-273; these read FVCSFLNCKASFSKAWKLEAHYCKH, FACDRCDKTFCTRCQLTRHNLSH, YQCLEDGCSESFISTAGLKNHVERVH, YVCDYEGCAKEFRKKKQLRSHKCEH, FECQYEGCGKKYTTSKKLQKHEKVH, YPCAEEGCDFQGRMWTEYQAHRKAAH, LQCDSCAKVFHKAWFLKKHKLFVH, FKCTKEGCQKTYTTHFNLQNHILSFH, and FICPHDGCGKAFAMEGSLKRHAVVH. Positions 272–322 are disordered; sequence VHDPQKKKLQKKTKRGRKKKLEPKTNVSDDSELPAQLHGLSLNTSTSQNNP. The span at 278-292 shows a compositional bias: basic residues; it reads KKLQKKTKRGRKKKL. The segment covering 312 to 322 has biased composition (polar residues); the sequence is SLNTSTSQNNP.

The protein resides in the nucleus. Functionally, involved in ribosomal large subunit biogenesis. Interacts with the internal control region (ICR) of approximately 50 bases within the 5S RNA genes, is required for correct transcription of these genes by RNA polymerase III. Also binds the transcribed 5S RNA's. This is Transcription factor IIIA (gtf3a) from Ictalurus punctatus (Channel catfish).